The sequence spans 88 residues: Small ribosomal subunit protein bS20 (88 aa).

A disordered region spans residues 1–27; the sequence is MANSKSAKKRALQSEKRRQHNASRRSM.

This sequence belongs to the bacterial ribosomal protein bS20 family.

In terms of biological role, binds directly to 16S ribosomal RNA. The polypeptide is Small ribosomal subunit protein bS20 (Shewanella oneidensis (strain ATCC 700550 / JCM 31522 / CIP 106686 / LMG 19005 / NCIMB 14063 / MR-1)).